Reading from the N-terminus, the 78-residue chain is uncharacterized protein (78 aa).

This is an uncharacterized protein from Dictyostelium discoideum (Social amoeba).